Here is a 29-residue protein sequence, read N- to C-terminus: uncharacterized protein (29 aa).

The protein localises to the plastid. It is found in the chloroplast. This is an uncharacterized protein from Trieres chinensis (Marine centric diatom).